A 162-amino-acid polypeptide reads, in one-letter code: Sorting nexin-3 (162 aa).

Position 2 is an N-acetylalanine (A2). The PX domain occupies 27–151 (NFLEIDVSNP…HMFLQDEIID (125 aa)). Residue R43 is modified to Omega-N-methylarginine. The a 1,2-diacyl-sn-glycero-3-phospho-(1D-myo-inositol-3-phosphate) site is built by R70, S72, K95, and R118. Position 72 is a phosphoserine (S72). Residue K95 forms a Glycyl lysine isopeptide (Lys-Gly) (interchain with G-Cter in SUMO2) linkage. Positions 147–162 (DEIIDKSYTPSKIRHA) are binds predominantly to PtdIns(P5) and weaker to PtdIns(P3) abd PtdIns(P4); involved in neurite outgrowth regulation.

This sequence belongs to the sorting nexin family. As to quaternary structure, interacts with VPS26A, VPS29 and VPS35; the interaction with VPS35 is direct. The association with the retromer CSC subcomplex subunits is proposed to represent a functional distinct retromer variant described as SNX3-retromer complex. Interacts with USP10 and SCNN1A. Interacts with TRFC. Interacts with SNX8; 2 molecules of SNX8 seems to associate with one molecule of SNX3. Interacts with PTPRU. Interacts with MON2 and DOP1B. Ubiquitinated, leading to its proteasomal degradation. Deubiquitinated by USP10.

It is found in the early endosome. Its subcellular location is the cytoplasmic vesicle. The protein resides in the phagosome. Phosphoinositide-binding protein required for multivesicular body formation. Specifically binds phosphatidylinositol 3-phosphate (PtdIns(P3)). Can also bind phosphatidylinositol 4-phosphate (PtdIns(P4)), phosphatidylinositol 5-phosphate (PtdIns(P5)) and phosphatidylinositol 3,5-biphosphate (PtdIns(3,5)P2). Plays a role in protein transport between cellular compartments. Together with RAB7A facilitates endosome membrane association of the retromer cargo-selective subcomplex (CSC/VPS). May in part act as component of the SNX3-retromer complex which mediates the retrograde endosome-to-TGN transport of WLS distinct from the SNX-BAR retromer pathway. Promotes stability and cell surface expression of epithelial sodium channel (ENAC) subunits SCNN1A and SCNN1G. Not involved in EGFR degradation. Involved in the regulation of phagocytosis in dendritic cells possibly by regulating EEA1 recruitment to the nascent phagosomes. Involved in iron homeostasis through regulation of endocytic recycling of the transferrin receptor TFRC presumably by delivering the transferrin:transferrin receptor complex to recycling endosomes; the function may involve the CSC retromer subcomplex. In the case of Salmonella enterica infection plays arole in maturation of the Salmonella-containing vacuole (SCV) and promotes recruitment of LAMP1 to SCVs. This chain is Sorting nexin-3, found in Homo sapiens (Human).